An 84-amino-acid chain; its full sequence is Large ribosomal subunit protein bL27 (84 aa).

The tract at residues 1–21 (MAHKKAGGSTRNGRDSESKRL) is disordered.

It belongs to the bacterial ribosomal protein bL27 family.

In Baumannia cicadellinicola subsp. Homalodisca coagulata, this protein is Large ribosomal subunit protein bL27.